A 557-amino-acid polypeptide reads, in one-letter code: Probable transcription factor sol4 (557 aa).

Residues 26–186 (IQYFFEDINW…EREMRRRMFC (161 aa)) are fungal transcription factor domain. A disordered region spans residues 463-490 (SGTQTRSMPSTETLTYNSSSSTSYGDGH). Positions 472–485 (STETLTYNSSSSTS) are enriched in low complexity.

It is found in the nucleus. Probable transcription factor that regulates the expression of the gene cluster that mediates the biosynthesis of the phytotoxin solanapyrone, a causal agent of early blight disease of potato and tomato. This is Probable transcription factor sol4 (sol4) from Alternaria solani.